A 141-amino-acid chain; its full sequence is Nucleoside diphosphate kinase (141 aa).

Positions 11, 59, 87, 93, 104, and 114 each coordinate ATP. H117 (pros-phosphohistidine intermediate) is an active-site residue.

The protein belongs to the NDK family. Homotetramer. Mg(2+) serves as cofactor.

The protein resides in the cytoplasm. The catalysed reaction is a 2'-deoxyribonucleoside 5'-diphosphate + ATP = a 2'-deoxyribonucleoside 5'-triphosphate + ADP. The enzyme catalyses a ribonucleoside 5'-diphosphate + ATP = a ribonucleoside 5'-triphosphate + ADP. Its function is as follows. Major role in the synthesis of nucleoside triphosphates other than ATP. The ATP gamma phosphate is transferred to the NDP beta phosphate via a ping-pong mechanism, using a phosphorylated active-site intermediate. This Polynucleobacter asymbioticus (strain DSM 18221 / CIP 109841 / QLW-P1DMWA-1) (Polynucleobacter necessarius subsp. asymbioticus) protein is Nucleoside diphosphate kinase.